The sequence spans 151 residues: Large ribosomal subunit protein uL15 (151 aa).

The interval 1-60 (MAENNPLKIHNLRPAPGAKTAKTRVGRGEASKGKTAGRGTKGTKARYQVPERFEGGQMPL) is disordered.

Belongs to the universal ribosomal protein uL15 family. Part of the 50S ribosomal subunit.

Binds to the 23S rRNA. The chain is Large ribosomal subunit protein uL15 from Streptomyces coelicolor (strain ATCC BAA-471 / A3(2) / M145).